The following is a 157-amino-acid chain: MPDLVAYTDGACSGNPGPGGWGALMRAKDGDTILKERELKGGEADTTNNRMELLAAISALEALDRPSTLTIITDSAYVKNGITGWMHGWKRNGWKTSTRKPVKNVDLWQRLDEAQSRHTVTWEWIKGHAGHEGNEKADELARAGMAPFKTGKRGKDG.

Residues 1–146 (MPDLVAYTDG…ADELARAGMA (146 aa)) enclose the RNase H type-1 domain. The Mg(2+) site is built by aspartate 9, glutamate 52, aspartate 74, and aspartate 138.

It belongs to the RNase H family. As to quaternary structure, monomer. Requires Mg(2+) as cofactor.

The protein resides in the cytoplasm. The catalysed reaction is Endonucleolytic cleavage to 5'-phosphomonoester.. Its function is as follows. Endonuclease that specifically degrades the RNA of RNA-DNA hybrids. This is Ribonuclease H from Jannaschia sp. (strain CCS1).